The following is a 138-amino-acid chain: Transcription antitermination protein NusB (138 aa).

Belongs to the NusB family.

Involved in transcription antitermination. Required for transcription of ribosomal RNA (rRNA) genes. Binds specifically to the boxA antiterminator sequence of the ribosomal RNA (rrn) operons. The polypeptide is Transcription antitermination protein NusB (Helicobacter pylori (strain P12)).